Here is a 199-residue protein sequence, read N- to C-terminus: 7-methyl-GTP pyrophosphatase (199 aa).

The Proton acceptor role is filled by aspartate 76.

The protein belongs to the Maf family. YceF subfamily. It depends on a divalent metal cation as a cofactor.

It localises to the cytoplasm. The catalysed reaction is N(7)-methyl-GTP + H2O = N(7)-methyl-GMP + diphosphate + H(+). In terms of biological role, nucleoside triphosphate pyrophosphatase that hydrolyzes 7-methyl-GTP (m(7)GTP). May have a dual role in cell division arrest and in preventing the incorporation of modified nucleotides into cellular nucleic acids. This chain is 7-methyl-GTP pyrophosphatase, found in Nitrosococcus oceani (strain ATCC 19707 / BCRC 17464 / JCM 30415 / NCIMB 11848 / C-107).